Reading from the N-terminus, the 688-residue chain is Elongation factor G (688 aa).

The 275-residue stretch at 8–282 (EKTRNIGIMA…AIIDYLPSPM (275 aa)) folds into the tr-type G domain. GTP is bound by residues 17-24 (AHIDAGKT), 81-85 (DTPGH), and 135-138 (NKMD).

This sequence belongs to the TRAFAC class translation factor GTPase superfamily. Classic translation factor GTPase family. EF-G/EF-2 subfamily.

It is found in the cytoplasm. Its function is as follows. Catalyzes the GTP-dependent ribosomal translocation step during translation elongation. During this step, the ribosome changes from the pre-translocational (PRE) to the post-translocational (POST) state as the newly formed A-site-bound peptidyl-tRNA and P-site-bound deacylated tRNA move to the P and E sites, respectively. Catalyzes the coordinated movement of the two tRNA molecules, the mRNA and conformational changes in the ribosome. In Apple proliferation phytoplasma, this protein is Elongation factor G (fusA).